The sequence spans 577 residues: Insulin-like growth factor 2 mRNA-binding protein 1 (577 aa).

2 consecutive RRM domains span residues 2-75 and 81-156; these read NKLY…HSVP and RKIQ…YIPD. Phosphoserine is present on residues Ser-12 and Ser-73. The tract at residues 156 to 190 is disordered; that stretch reads DEQITQGPENGRRGGFGSRGQPRQGSPVAAGAPAK. Phosphoserine; by MTOR is present on Ser-181. KH domains lie at 195–260, 276–343, 405–470, and 487–553; these read DIPL…CKMI, EVPL…EQEI, QEMV…QGRI, and KLET…QRKI. Positions 312 to 323 are sufficient for nuclear export; that stretch reads ISSLQDLTLYNP. Residues 485–495 form a sufficient for nuclear export region; that stretch reads EVKLETHIRVP. A Phosphothreonine modification is found at Thr-528.

This sequence belongs to the RRM IMP/VICKZ family. As to quaternary structure, can form homodimers and heterodimers with IGF2BP1 and IGF2BP3. Component of the coding region determinant (CRD)-mediated complex, composed of DHX9, HNRNPU, IGF2BP1, SYNCRIP and YBX1. Identified in a mRNP complex, at least composed of DHX9, DDX3X, ELAVL1, HNRNPU, IGF2BP1, ILF3, PABPC1, PCBP2, PTBP2, STAU1, STAU2, SYNCRIP and YBX1. Associates with mRNP complex. Interacts with FMR1. Component of a multisubunit autoregulatory RNP complex (ARC), at least composed of IGF2BP1, PABPC1 and CSDE1. Interacts with AGO1 and AGO2. Interacts, through domains KH3 and KH4, with PABPC1 in an RNA-independent manner. Component of a TAU mRNP complex, at least composed of IGF2BP1, ELAVL4 and G3BP. Interacts with ELAVL4 in an RNA-dependent manner. Associates with microtubules and polysomes. Interacts with ELAVL1 and MATR3. Post-translationally, phosphorylated at Ser-181 by mTORC2 cotranslationally, promoting binding to the 3'-UTR of IGF2 mRNA. Expressed in zygotes and blastocysts (at protein level). Expressed in brain, skeletal muscle, trophoblasts of placenta, oocytes and spermatogonia (at protein level). Expressed in testis and ovary. Following colon injury, expressed in the wound bed mesenchyme during the first phase of repair, probably by colonic mesenchymal stem cells (at protein level).

The protein resides in the nucleus. Its subcellular location is the cytoplasm. It is found in the perinuclear region. The protein localises to the P-body. It localises to the stress granule. The protein resides in the cell projection. Its subcellular location is the lamellipodium. It is found in the dendrite. The protein localises to the dendritic spine. It localises to the growth cone. The protein resides in the filopodium. Its subcellular location is the axon. Functionally, RNA-binding factor that recruits target transcripts to cytoplasmic protein-RNA complexes (mRNPs). This transcript 'caging' into mRNPs allows mRNA transport and transient storage. It also modulates the rate and location at which target transcripts encounter the translational apparatus and shields them from endonuclease attacks or microRNA-mediated degradation. Preferentially binds to N6-methyladenosine (m6A)-containing mRNAs and increases their stability. Regulates localized beta-actin/ACTB mRNA translation, a crucial process for cell polarity, cell migration and neurite outgrowth. Co-transcriptionally associates with the ACTB mRNA in the nucleus. This binding involves a conserved 54-nucleotide element in the ACTB mRNA 3'-UTR, known as the 'zipcode'. The RNP thus formed is exported to the cytoplasm, binds to a motor protein and is transported along the cytoskeleton to the cell periphery. During transport, prevents ACTB mRNA from being translated into protein. When the RNP complex reaches its destination near the plasma membrane, IGF2BP1 is phosphorylated. This releases the mRNA, allowing ribosomal 40S and 60S subunits to assemble and initiate ACTB protein synthesis. Monomeric ACTB then assembles into the subcortical actin cytoskeleton. During neuronal development, key regulator of neurite outgrowth, growth cone guidance and neuronal cell migration, presumably through the spatiotemporal fine tuning of protein synthesis, such as that of ACTB. May regulate mRNA transport to activated synapses. Binds to the 3'-UTR of CD44 mRNA and stabilizes it, hence promotes cell adhesion and invadopodia formation in cancer cells. Binds to the oncofetal H19 transcript and regulates its localization. Binds to and stabilizes BTRC/FBW1A mRNA. Binds to the adenine-rich autoregulatory sequence (ARS) located in PABPC1 mRNA and represses its translation. PABPC1 mRNA-binding is stimulated by PABPC1 protein. Prevents BTRC/FBW1A mRNA degradation by disrupting microRNA-dependent interaction with AGO2. During cellular stress, such as oxidative stress or heat shock, stabilizes target mRNAs that are recruited to stress granules, including CD44, IGF2, MAPK4, MYC, PTEN, RAPGEF2 and RPS6KA5 transcripts. Interacts with GAP43 transcript and transports it to axons. Binds to the 3'-UTR of IGF2 mRNA by a mechanism of cooperative and sequential dimerization and regulates IGF2 mRNA subcellular localization and translation. Binds to MYC mRNA, in the coding region instability determinant (CRD) of the open reading frame (ORF), hence prevents MYC cleavage by endonucleases and possibly microRNA targeting to MYC-CRD. Binding to MYC mRNA is enhanced by m6A-modification of the CRD. Binds to and stabilizes ABCB1/MDR-1 mRNA. Binds to the neuron-specific TAU mRNA and regulates its localization. Plays a direct role in the transport and translation of transcripts required for axonal regeneration in adult sensory neurons. During interstinal wound repair, interacts with and stabilizes PTGS2 transcript. PTGS2 mRNA stabilization may be crucial for colonic mucosal wound healing. This chain is Insulin-like growth factor 2 mRNA-binding protein 1 (Igf2bp1), found in Mus musculus (Mouse).